A 301-amino-acid chain; its full sequence is 4-hydroxy-tetrahydrodipicolinate synthase (301 aa).

Position 46 (Thr-46) interacts with pyruvate. Tyr-134 acts as the Proton donor/acceptor in catalysis. The active-site Schiff-base intermediate with substrate is Lys-162. A pyruvate-binding site is contributed by Ile-203.

It belongs to the DapA family. As to quaternary structure, homotetramer; dimer of dimers.

The protein resides in the cytoplasm. The enzyme catalyses L-aspartate 4-semialdehyde + pyruvate = (2S,4S)-4-hydroxy-2,3,4,5-tetrahydrodipicolinate + H2O + H(+). Its pathway is amino-acid biosynthesis; L-lysine biosynthesis via DAP pathway; (S)-tetrahydrodipicolinate from L-aspartate: step 3/4. Its function is as follows. Catalyzes the condensation of (S)-aspartate-beta-semialdehyde [(S)-ASA] and pyruvate to 4-hydroxy-tetrahydrodipicolinate (HTPA). The chain is 4-hydroxy-tetrahydrodipicolinate synthase from Anaplasma marginale (strain St. Maries).